Consider the following 150-residue polypeptide: Large ribosomal subunit protein uL23m (150 aa).

It belongs to the universal ribosomal protein uL23 family. Component of the mitochondrial ribosome large subunit (39S) which comprises a 16S rRNA and about 50 distinct proteins.

The protein localises to the mitochondrion. The sequence is that of Large ribosomal subunit protein uL23m (mRpL23) from Drosophila melanogaster (Fruit fly).